The sequence spans 349 residues: Green-sensitive opsin-1 (349 aa).

The Extracellular portion of the chain corresponds to 1-36 (MNGTEGSNFYIPMSNRTGLVRSPYDYTQYYLAEPWK). N-linked (GlcNAc...) asparagine glycans are attached at residues asparagine 2 and asparagine 15. Residues 37-61 (FKALAFYMFLLIIFGFPINVLTLVV) form a helical membrane-spanning segment. The Cytoplasmic portion of the chain corresponds to 62–73 (TAQHKKLRQPLN). Residues 74–99 (YILVNLAFAGTIMVIFGFTVSFYCSL) form a helical membrane-spanning segment. The Extracellular portion of the chain corresponds to 100 to 113 (VGYMALGPLGCVME). A disulfide bridge links cysteine 110 with cysteine 187. A helical transmembrane segment spans residues 114–133 (GFFATLGGQVALWSLVVLAI). Over 134 to 152 (ERYIVVCKPMGSFKFSANH) the chain is Cytoplasmic. A helical membrane pass occupies residues 153–176 (AMAGIAFTWFMACSCAVPPLFGWS). Topologically, residues 177 to 202 (RYLPEGMQTSCGPDYYTLNPEYNNES) are extracellular. Residue asparagine 200 is glycosylated (N-linked (GlcNAc...) asparagine). A helical transmembrane segment spans residues 203 to 230 (YVMYMFSCHFCIPVTTIFFTYGSLVCTV). Topologically, residues 231-252 (KAAAAQQQESESTQKAEREVTR) are cytoplasmic. A helical transmembrane segment spans residues 253 to 276 (MVILMVLGFLFAWVPYASFAAWIF). At 277–284 (FNRGAAFS) the chain is on the extracellular side. The chain crosses the membrane as a helical span at residues 285–309 (AQAMAVPAFFSKTSAVFNPIIYVLL). Lysine 296 is subject to N6-(retinylidene)lysine. The Cytoplasmic segment spans residues 310-349 (NKQFRSCMLNTLFCGKSPLGDDESSSVSTSKTEVSSVSPA). A disordered region spans residues 328–349 (LGDDESSSVSTSKTEVSSVSPA). Low complexity predominate over residues 334–349 (SSVSTSKTEVSSVSPA).

This sequence belongs to the G-protein coupled receptor 1 family. Opsin subfamily. In terms of processing, phosphorylated on some or all of the serine and threonine residues present in the C-terminal region. As to expression, retinal double cone accessory photoreceptor cell outer segments.

It localises to the membrane. In terms of biological role, visual pigments are the light-absorbing molecules that mediate vision. They consist of an apoprotein, opsin, covalently linked to cis-retinal. The polypeptide is Green-sensitive opsin-1 (opn1mw1) (Danio rerio (Zebrafish)).